The sequence spans 309 residues: MTKKLKILSVISTICMIPLLLGGALVTKTGSADGCGNSWPLCEGQFLPTKISFEMFIELSHRGVTGVVGILIVYLTYLVWKELRHNKEVVFLAFSALSLMILQALIGAAAVVWGQSDFALATHFGISLVCFAAVFLLMLQLFEIDKKLHTEDIHINKTHRIEIYAISFYTMCVVYSGALVRHTDSNLACRDWPLCVNNSSFGISDYNFYQWVQMGHRLAAGILFIWTVILTIRMVKHYKNSKVFYWSWLITLGLITLQVLFGALIIFTSLNLAIALFHALFITCYFGMLSFFMHLSFRAKRREKYSNQS.

Over 1–6 the chain is Cytoplasmic; that stretch reads MTKKLK. The helical transmembrane segment at 7–27 threads the bilayer; it reads ILSVISTICMIPLLLGGALVT. Over 28 to 62 the chain is Extracellular; it reads KTGSADGCGNSWPLCEGQFLPTKISFEMFIELSHR. The cysteines at positions 35 and 42 are disulfide-linked. Glutamate 58 is an active-site residue. Residue histidine 61 participates in heme o binding. A helical transmembrane segment spans residues 63-83; it reads GVTGVVGILIVYLTYLVWKEL. Over 84-88 the chain is Cytoplasmic; that stretch reads RHNKE. Residues 89 to 109 traverse the membrane as a helical segment; sequence VVFLAFSALSLMILQALIGAA. Residues 110 to 123 are Extracellular-facing; it reads AVVWGQSDFALATH. Histidine 123 is a heme o binding site. Residues 124–144 form a helical membrane-spanning segment; it reads FGISLVCFAAVFLLMLQLFEI. Residues 145–159 lie on the Cytoplasmic side of the membrane; that stretch reads DKKLHTEDIHINKTH. Residues 160 to 180 traverse the membrane as a helical segment; that stretch reads RIEIYAISFYTMCVVYSGALV. Over 181-211 the chain is Extracellular; sequence RHTDSNLACRDWPLCVNNSSFGISDYNFYQW. A disulfide bond links cysteine 189 and cysteine 195. The chain crosses the membrane as a helical span at residues 212–232; the sequence is VQMGHRLAAGILFIWTVILTI. Position 216 (histidine 216) interacts with heme b. Residues 233–247 are Cytoplasmic-facing; the sequence is RMVKHYKNSKVFYWS. The helical transmembrane segment at 248–268 threads the bilayer; sequence WLITLGLITLQVLFGALIIFT. Over 269–271 the chain is Extracellular; it reads SLN. Residues 272–292 traverse the membrane as a helical segment; the sequence is LAIALFHALFITCYFGMLSFF. A heme b-binding site is contributed by histidine 278. The Cytoplasmic portion of the chain corresponds to 293-309; the sequence is MHLSFRAKRREKYSNQS.

Belongs to the COX15/CtaA family. Type 1 subfamily. As to quaternary structure, interacts with CtaB. Heme b is required as a cofactor.

The protein resides in the cell membrane. The enzyme catalyses Fe(II)-heme o + 2 A + H2O = Fe(II)-heme a + 2 AH2. Its pathway is porphyrin-containing compound metabolism; heme A biosynthesis; heme A from heme O: step 1/1. Catalyzes the conversion of heme O to heme A by two successive hydroxylations of the methyl group at C8. The first hydroxylation forms heme I, the second hydroxylation results in an unstable dihydroxymethyl group, which spontaneously dehydrates, resulting in the formyl group of heme A. This is Heme A synthase from Oceanobacillus iheyensis (strain DSM 14371 / CIP 107618 / JCM 11309 / KCTC 3954 / HTE831).